The primary structure comprises 151 residues: uncharacterized protein (151 aa).

The signal sequence occupies residues 1 to 32; the sequence is MEEAEKAKRRSIELLNETRNCAYSSFVALAEA. A helical membrane pass occupies residues 45–67; sequence AIGFAGGISGSGHICGALWGSIA.

It localises to the membrane. This is an uncharacterized protein from Archaeoglobus fulgidus (strain ATCC 49558 / DSM 4304 / JCM 9628 / NBRC 100126 / VC-16).